Consider the following 796-residue polypeptide: N-terminal acetyltransferase B complex subunit MDM20 (796 aa).

Ser2 carries the post-translational modification N-acetylserine.

It belongs to the MDM20/NAA25 family. As to quaternary structure, component of the N-terminal acetyltransferase B (NatB) complex, which is composed of NAT3 and MDM20.

The protein resides in the cytoplasm. Functionally, non-catalytic subunit of the NatB N-terminal acetyltransferase, which catalyzes acetylation of the amino-terminal methionine residues of all proteins beginning with Met-Asp or Met-Glu and of some proteins beginning with Met-Asn or Met-Met. NatB acetylates TPM1 protein and regulates tropomyocin-actin interactions. MDM20 is required for mitochondrial inheritance during budding and together with TPM1, is essential for the integrity and assembly of actin cables. Genetically interacts with CIN8. In Saccharomyces cerevisiae (strain ATCC 204508 / S288c) (Baker's yeast), this protein is N-terminal acetyltransferase B complex subunit MDM20 (MDM20).